The chain runs to 452 residues: Probable mannose-6-phosphate isomerase (452 aa).

Positions 141, 143, 168, and 295 each coordinate Zn(2+). Arg-314 is a catalytic residue.

This sequence belongs to the mannose-6-phosphate isomerase type 1 family. Zn(2+) is required as a cofactor.

The protein resides in the cytoplasm. The enzyme catalyses D-mannose 6-phosphate = D-fructose 6-phosphate. It participates in nucleotide-sugar biosynthesis; GDP-alpha-D-mannose biosynthesis; alpha-D-mannose 1-phosphate from D-fructose 6-phosphate: step 1/2. Its function is as follows. Involved in the synthesis of the GDP-mannose and dolichol-phosphate-mannose required for a number of critical mannosyl transfer reactions. This is Probable mannose-6-phosphate isomerase (mpi) from Dictyostelium discoideum (Social amoeba).